Reading from the N-terminus, the 376-residue chain is Chorismate synthase (376 aa).

Positions 39 and 45 each coordinate NADP(+). Residues 115-117, Gly-276, 291-295, and Arg-317 each bind FMN; these read RSS and KPIPT.

The protein belongs to the chorismate synthase family. In terms of assembly, homotetramer. FMNH2 serves as cofactor.

It carries out the reaction 5-O-(1-carboxyvinyl)-3-phosphoshikimate = chorismate + phosphate. It functions in the pathway metabolic intermediate biosynthesis; chorismate biosynthesis; chorismate from D-erythrose 4-phosphate and phosphoenolpyruvate: step 7/7. Functionally, catalyzes the anti-1,4-elimination of the C-3 phosphate and the C-6 proR hydrogen from 5-enolpyruvylshikimate-3-phosphate (EPSP) to yield chorismate, which is the branch point compound that serves as the starting substrate for the three terminal pathways of aromatic amino acid biosynthesis. This reaction introduces a second double bond into the aromatic ring system. In Thermotoga sp. (strain RQ2), this protein is Chorismate synthase.